Consider the following 335-residue polypeptide: Nucleoid-associated protein PSEEN4449 (335 aa).

The protein belongs to the YejK family.

The protein localises to the cytoplasm. The protein resides in the nucleoid. The chain is Nucleoid-associated protein PSEEN4449 from Pseudomonas entomophila (strain L48).